We begin with the raw amino-acid sequence, 317 residues long: uncharacterized protein (317 aa).

In terms of domain architecture, HTH lysR-type spans 29–86 (IDLNLLTIFEAVYVHKGIVNAAKVLNLTPSAISQSIQKLRVIFPDPLFIRKGQGVTPT). The H-T-H motif DNA-binding region spans 46–65 (IVNAAKVLNLTPSAISQSIQ).

The protein belongs to the LysR transcriptional regulatory family.

This is an uncharacterized protein from Escherichia coli (strain K12).